Consider the following 443-residue polypeptide: GTPase Der (443 aa).

2 consecutive EngA-type G domains span residues P3–E167 and V176–M349. GTP is bound by residues G9–S16, D56–F60, N119–E122, G182–S189, D229–M233, and N294–D297. A KH-like domain is found at A350–K434.

It belongs to the TRAFAC class TrmE-Era-EngA-EngB-Septin-like GTPase superfamily. EngA (Der) GTPase family. As to quaternary structure, associates with the 50S ribosomal subunit.

In terms of biological role, GTPase that plays an essential role in the late steps of ribosome biogenesis. The chain is GTPase Der from Dechloromonas aromatica (strain RCB).